A 138-amino-acid chain; its full sequence is Basic phospholipase A2 homolog Vur-S49 (138 aa).

Positions Met-1–Gly-16 are cleaved as a signal peptide. Intrachain disulfides connect Cys-42/Cys-131, Cys-44/Cys-60, Cys-59/Cys-111, Cys-65/Cys-138, Cys-66/Cys-104, Cys-73/Cys-97, and Cys-91/Cys-102. Positions Lys-121–Gly-133 are important for membrane-damaging activities in eukaryotes and bacteria; heparin-binding.

It belongs to the phospholipase A2 family. Group II subfamily. S49 sub-subfamily. Expressed by the venom gland.

The protein localises to the secreted. Snake venom phospholipase A2 homolog that lacks enzymatic activity. Is able to suppress the acetylcholine (ACh)-evoked current mediated by alpha-7 (CHRNA7)-similar nAChRs in L.stagnalis neurons (IC(50)=2.18 uM). This activity is only partially reversible and seems to be non-competitive. This Vipera renardi (Steppe viper) protein is Basic phospholipase A2 homolog Vur-S49.